Reading from the N-terminus, the 475-residue chain is Ataxin-10 (475 aa).

An Omega-N-methylarginine modification is found at Arg-10. Phosphoserine occurs at positions 12 and 77. At Thr-82 the chain carries Phosphothreonine. Ser-430 carries the post-translational modification Phosphoserine.

The protein belongs to the ataxin-10 family. Homooligomer. Interacts with GNB2. Interacts with IQCB1. Interacts with OGT. Interacts with PLK1. In terms of processing, polyubiquitinated. Post-translationally, phosphorylation at Ser-12 by AURKB promotes the association of ATXN10 with PLK1. Phosphorylation at Ser-77 and Thr-82 by PLK1 may play a role in the regulation of cytokinesis and may stimulate the proteasome-mediated degradation of ATXN10. In high cell density areas; cerebellar cortex, dentate gyrus, hippocampus, anterior olfactory nucleus, primary olfactory cortex.

The protein resides in the cytoplasm. Its subcellular location is the perinuclear region. It localises to the midbody. It is found in the cytoskeleton. The protein localises to the cilium basal body. The protein resides in the microtubule organizing center. Its subcellular location is the centrosome. It localises to the centriole. Functionally, may play a role in the regulation of cytokinesis. May play a role in signaling by stimulating protein glycosylation. Induces neuritogenesis by activating the Ras-MAP kinase pathway and is necessary for the survival of cerebellar neurons. Does not appear to play a major role in ciliogenesis. The chain is Ataxin-10 (Atxn10) from Mus musculus (Mouse).